The following is a 279-amino-acid chain: Large ribosomal subunit protein uL2 (279 aa).

The disordered stretch occupies residues 224-279 (AMNPIDHPHGGGEGRTSGGRHPVTPWGKGTKGNRTRKSKASDKLIVRSRHAKKKGR). Residues 269 to 279 (VRSRHAKKKGR) are compositionally biased toward basic residues.

This sequence belongs to the universal ribosomal protein uL2 family. As to quaternary structure, part of the 50S ribosomal subunit. Forms a bridge to the 30S subunit in the 70S ribosome.

Functionally, one of the primary rRNA binding proteins. Required for association of the 30S and 50S subunits to form the 70S ribosome, for tRNA binding and peptide bond formation. It has been suggested to have peptidyltransferase activity; this is somewhat controversial. Makes several contacts with the 16S rRNA in the 70S ribosome. This is Large ribosomal subunit protein uL2 from Cereibacter sphaeroides (strain ATCC 17029 / ATH 2.4.9) (Rhodobacter sphaeroides).